The following is a 1537-amino-acid chain: Dual oxidase (1537 aa).

Residues 1 to 29 (MSVPSAPHQRAESKNRVPRPGQKNRKLPK) are disordered. The Extracellular segment spans residues 1 to 626 (MSVPSAPHQR…EGYDYFSGSE (626 aa)). The segment at 63-628 (MYSQTEKQRY…YDYFSGSELM (566 aa)) is peroxidase-like; mediates peroxidase activity. N-linked (GlcNAc...) asparagine glycans are attached at residues N133, N233, N577, and N606. A helical membrane pass occupies residues 627 to 647 (LMFIYVCVFLGFVPILCAGAG). Topologically, residues 648–1029 (YCVVKLQNSK…ITFLEENRQN (382 aa)) are cytoplasmic. Position 826 is a phosphoserine (S826). EF-hand domains lie at 855–890 (PNDM…FSRG), 891–926 (KTDD…LVEI), and 936–971 (QVTE…YKGD). Residues D868, D870, D872, R874, E879, D904, D906, N908, and E915 each contribute to the Ca(2+) site. The helical transmembrane segment at 1030 to 1050 (IFYLFLFYVVTIVLFVERFIH) threads the bilayer. The Extracellular segment spans residues 1051–1065 (YSFMAEHTDLRHIMG). The chain crosses the membrane as a helical span at residues 1066 to 1086 (VGIAITRGSAASLSFCYSLLL). The region spanning 1078–1218 (LSFCYSLLLL…TLYIGLYLLS (141 aa)) is the Ferric oxidoreductase domain. Residues 1087 to 1116 (LTMSRNLITKLKEFPIQQYIPLDSHIQFHK) lie on the Cytoplasmic side of the membrane. Y1105 is modified (phosphotyrosine). A helical transmembrane segment spans residues 1117-1137 (IAACTALFFSVLHTVGHIVNF). Topologically, residues 1138-1171 (YHVSTQSHENLRCLTREVHFASDYKPDITFWLFQ) are extracellular. Residues 1172–1192 (TVTGTTGVMLFIIMCIIFVFA) traverse the membrane as a helical segment. The Cytoplasmic segment spans residues 1193 to 1202 (HPTIRKKAYN). The chain crosses the membrane as a helical span at residues 1203 to 1223 (FFWNMHTLYIGLYLLSLIHGL). Topologically, residues 1224 to 1230 (ARLTGPP) are extracellular. Residues 1231–1251 (RFWMFFLGPGIVYTLDKIVSL) traverse the membrane as a helical segment. Residues 1252-1537 (RTKYMALDVI…YFIHHFENFG (286 aa)) lie on the Cytoplasmic side of the membrane. Positions 1253 to 1358 (TKYMALDVID…EGPFGGGNQD (106 aa)) constitute an FAD-binding FR-type domain.

This sequence in the N-terminal section; belongs to the peroxidase family.

The protein localises to the membrane. It carries out the reaction NADH + O2 + H(+) = H2O2 + NAD(+). It catalyses the reaction NADPH + O2 + H(+) = H2O2 + NADP(+). Peroxidase activity is inhibited by aminotriazole and azide. Functionally, plays a role in innate immunity limiting microbial proliferation in the gut. Acts downstream of a hh-signaling pathway to induce the production of reactive oxygen species (ROS) in response to intestinal bacterial infection. May generate antimicrobial oxidative burst through its peroxidase-like domain. The sequence is that of Dual oxidase (Duox) from Drosophila melanogaster (Fruit fly).